A 296-amino-acid chain; its full sequence is Acetylglutamate kinase (296 aa).

Substrate contacts are provided by residues 69–70, R91, and N193; that span reads GG.

The protein belongs to the acetylglutamate kinase family. ArgB subfamily.

It is found in the cytoplasm. The enzyme catalyses N-acetyl-L-glutamate + ATP = N-acetyl-L-glutamyl 5-phosphate + ADP. It participates in amino-acid biosynthesis; L-arginine biosynthesis; N(2)-acetyl-L-ornithine from L-glutamate: step 2/4. Functionally, catalyzes the ATP-dependent phosphorylation of N-acetyl-L-glutamate. This chain is Acetylglutamate kinase, found in Delftia acidovorans (strain DSM 14801 / SPH-1).